A 570-amino-acid chain; its full sequence is 5-aminolevulinate synthase, mitochondrial (570 aa).

Residues methionine 1 to tyrosine 53 constitute a mitochondrion transit peptide. Arginine 119, serine 232, and lysine 251 together coordinate substrate. Serine 284, histidine 312, and threonine 356 together coordinate pyridoxal 5'-phosphate. The active site involves lysine 359. Lysine 359 bears the N6-(pyridoxal phosphate)lysine mark. Threonine 388 and threonine 389 together coordinate pyridoxal 5'-phosphate. Threonine 474 contributes to the substrate binding site.

The protein belongs to the class-II pyridoxal-phosphate-dependent aminotransferase family. In terms of assembly, homodimer. It depends on pyridoxal 5'-phosphate as a cofactor.

The protein resides in the mitochondrion matrix. It carries out the reaction succinyl-CoA + glycine + H(+) = 5-aminolevulinate + CO2 + CoA. It participates in porphyrin-containing compound metabolism; protoporphyrin-IX biosynthesis; 5-aminolevulinate from glycine: step 1/1. In terms of biological role, catalyzes the synthesis of 5-aminolevulinate (ALA) from succinyl-CoA and glycine, the first and rate-limiting step in heme biosynthesis. This Kluyveromyces lactis (strain ATCC 8585 / CBS 2359 / DSM 70799 / NBRC 1267 / NRRL Y-1140 / WM37) (Yeast) protein is 5-aminolevulinate synthase, mitochondrial (HEM1).